Reading from the N-terminus, the 96-residue chain is (4S)-4-hydroxy-5-phosphonooxypentane-2,3-dione isomerase (96 aa).

The 90-residue stretch at histidine 2–phenylalanine 91 folds into the ABM domain.

Belongs to the LsrG family. Homodimer.

It localises to the cytoplasm. The catalysed reaction is (2S)-2-hydroxy-3,4-dioxopentyl phosphate = 3-hydroxy-2,4-dioxopentyl phosphate. Its function is as follows. Involved in the degradation of phospho-AI-2, thereby terminating induction of the lsr operon and closing the AI-2 signaling cycle. Catalyzes the conversion of (4S)-4-hydroxy-5-phosphonooxypentane-2,3-dione (P-DPD) to 3-hydroxy-5-phosphonooxypentane-2,4-dione (P-HPD). The protein is (4S)-4-hydroxy-5-phosphonooxypentane-2,3-dione isomerase of Yersinia enterocolitica serotype O:8 / biotype 1B (strain NCTC 13174 / 8081).